The following is a 428-amino-acid chain: 3-phosphoshikimate 1-carboxyvinyltransferase (428 aa).

3-phosphoshikimate-binding residues include Lys-20, Ser-21, and Arg-25. Lys-20 lines the phosphoenolpyruvate pocket. Residues Gly-92 and Arg-120 each contribute to the phosphoenolpyruvate site. 3-phosphoshikimate is bound by residues Ser-166, Gln-168, Asp-314, and Lys-341. Residue Gln-168 coordinates phosphoenolpyruvate. Asp-314 functions as the Proton acceptor in the catalytic mechanism. Phosphoenolpyruvate is bound by residues Arg-345 and Arg-387.

This sequence belongs to the EPSP synthase family. Monomer.

The protein resides in the cytoplasm. It catalyses the reaction 3-phosphoshikimate + phosphoenolpyruvate = 5-O-(1-carboxyvinyl)-3-phosphoshikimate + phosphate. It participates in metabolic intermediate biosynthesis; chorismate biosynthesis; chorismate from D-erythrose 4-phosphate and phosphoenolpyruvate: step 6/7. Its function is as follows. Catalyzes the transfer of the enolpyruvyl moiety of phosphoenolpyruvate (PEP) to the 5-hydroxyl of shikimate-3-phosphate (S3P) to produce enolpyruvyl shikimate-3-phosphate and inorganic phosphate. In Listeria monocytogenes serotype 4a (strain HCC23), this protein is 3-phosphoshikimate 1-carboxyvinyltransferase.